Here is a 287-residue protein sequence, read N- to C-terminus: uncharacterized protein (287 aa).

Basic and acidic residues predominate over residues 1–17; it reads MRWQGRRESDNVEDRRN. Residues 1–29 form a disordered region; the sequence is MRWQGRRESDNVEDRRNSSGGPSMGGPGF. A helical transmembrane segment spans residues 38 to 60; that stretch reads LILLIVVLVAGYYGVDLTGLMTG.

The protein localises to the membrane. This is an uncharacterized protein from Escherichia coli O6:H1 (strain CFT073 / ATCC 700928 / UPEC).